We begin with the raw amino-acid sequence, 482 residues long: Islet cell autoantigen 1-like protein (482 aa).

The 204-residue stretch at 44-247 (ASDAELDAKL…TARMMSQIHE (204 aa)) folds into the AH domain. Disordered regions lie at residues 365–393 (TQECQTAFGSPSASLTSQEPSMGSEPLAH) and 427–449 (SHTDNQPVPSQSPKKLTRSPNNG). Polar residues-rich tracts occupy residues 366–385 (QECQTAFGSPSASLTSQEPS) and 428–449 (HTDNQPVPSQSPKKLTRSPNNG).

The protein is Islet cell autoantigen 1-like protein (ICA1L) of Homo sapiens (Human).